The primary structure comprises 378 residues: Vacuolar membrane protein CAGL0J10076g (378 aa).

Residues 18–70 (RGLPRLVTTSTTPTPTTEPTTEPTTTKDETSQTSATDASTATTSTAATSTAAT) are disordered. 2 stretches are compositionally biased toward low complexity: residues 25–41 (TTST…TEPT) and 48–70 (SQTS…TAAT). The chain crosses the membrane as a helical span at residues 118–138 (FIAVGSIAGAILMLIFLWWSI). Residues 299 to 368 (NDYDTPLIPD…ARDHRKTPSM (70 aa)) form a disordered region. Positions 321–337 (RSHRKTPSNDKYHRRNR) are enriched in basic residues. Low complexity predominate over residues 343–356 (SPSRSPTRTPIRTR).

This sequence belongs to the PRM5 family.

Its subcellular location is the vacuole membrane. The polypeptide is Vacuolar membrane protein CAGL0J10076g (Candida glabrata (strain ATCC 2001 / BCRC 20586 / JCM 3761 / NBRC 0622 / NRRL Y-65 / CBS 138) (Yeast)).